Reading from the N-terminus, the 77-residue chain is Epoxide hydrolase (77 aa).

Monomer.

The enzyme catalyses an epoxide + H2O = an ethanediol. Functionally, this enzyme acts on aliphatic epoxides. Its substrates include epichlorohydrin, epibromohydrin, epoxyoctane and styrene epoxide. In Pseudomonas sp. (strain AD1), this protein is Epoxide hydrolase.